We begin with the raw amino-acid sequence, 100 residues long: Large ribosomal subunit protein bL28 (100 aa).

This sequence belongs to the bacterial ribosomal protein bL28 family.

This is Large ribosomal subunit protein bL28 from Ehrlichia ruminantium (strain Gardel).